The primary structure comprises 173 residues: Shikimate kinase (173 aa).

11 to 16 (GTGKTS) lines the ATP pocket. Position 15 (T15) interacts with Mg(2+). Substrate is bound by residues D33, R57, and G79. Position 117 (R117) interacts with ATP. A substrate-binding site is contributed by R136.

The protein belongs to the shikimate kinase family. As to quaternary structure, monomer. The cofactor is Mg(2+).

The protein resides in the cytoplasm. It carries out the reaction shikimate + ATP = 3-phosphoshikimate + ADP + H(+). It functions in the pathway metabolic intermediate biosynthesis; chorismate biosynthesis; chorismate from D-erythrose 4-phosphate and phosphoenolpyruvate: step 5/7. Its function is as follows. Catalyzes the specific phosphorylation of the 3-hydroxyl group of shikimic acid using ATP as a cosubstrate. The protein is Shikimate kinase of Thermodesulfovibrio yellowstonii (strain ATCC 51303 / DSM 11347 / YP87).